The following is a 118-amino-acid chain: UPF0295 protein GWCH70_0499 (118 aa).

Helical transmembrane passes span Ile-12–Phe-32 and Leu-42–Gly-62.

Belongs to the UPF0295 family.

It is found in the cell membrane. The protein is UPF0295 protein GWCH70_0499 of Geobacillus sp. (strain WCH70).